We begin with the raw amino-acid sequence, 217 residues long: Octanoyltransferase (217 aa).

A BPL/LPL catalytic domain is found at 31 to 206 (KSVMDEAWLL…ELVSRLGYAE (176 aa)). Residues 70-77 (RGGQVTYH), 137-139 (SLG), and 150-152 (GLA) each bind substrate. C168 functions as the Acyl-thioester intermediate in the catalytic mechanism.

This sequence belongs to the LipB family.

The protein resides in the cytoplasm. It catalyses the reaction octanoyl-[ACP] + L-lysyl-[protein] = N(6)-octanoyl-L-lysyl-[protein] + holo-[ACP] + H(+). It participates in protein modification; protein lipoylation via endogenous pathway; protein N(6)-(lipoyl)lysine from octanoyl-[acyl-carrier-protein]: step 1/2. Functionally, catalyzes the transfer of endogenously produced octanoic acid from octanoyl-acyl-carrier-protein onto the lipoyl domains of lipoate-dependent enzymes. Lipoyl-ACP can also act as a substrate although octanoyl-ACP is likely to be the physiological substrate. This chain is Octanoyltransferase, found in Pseudomonas aeruginosa (strain UCBPP-PA14).